The sequence spans 473 residues: Photosystem II CP43 reaction center protein (473 aa).

The propeptide occupies 1-14 (MKTLYSLRRFYHVE). An N-acetylthreonine modification is found at threonine 15. The residue at position 15 (threonine 15) is a Phosphothreonine. 5 helical membrane-spanning segments follow: residues 69–93 (LFEVAHFVPEKPMYEQGLILLPHLA), 134–155 (LLGPETLEESFPFFGYVWKDRN), 178–200 (KASYFGGIYDTWAPGGGDVRKIT), 255–275 (KPFAWARRALVWSGEAYLSYS), and 291–312 (WFNNTAYPSEFYGPTGPEASQA). Glutamate 367 serves as a coordination point for [CaMn4O5] cluster. Residues 447 to 471 (RARAAAAGFEKGIDRDFEPVLSMTP) form a helical membrane-spanning segment.

The protein belongs to the PsbB/PsbC family. PsbC subfamily. PSII is composed of 1 copy each of membrane proteins PsbA, PsbB, PsbC, PsbD, PsbE, PsbF, PsbH, PsbI, PsbJ, PsbK, PsbL, PsbM, PsbT, PsbX, PsbY, PsbZ, Psb30/Ycf12, at least 3 peripheral proteins of the oxygen-evolving complex and a large number of cofactors. It forms dimeric complexes. The cofactor is Binds multiple chlorophylls and provides some of the ligands for the Ca-4Mn-5O cluster of the oxygen-evolving complex. It may also provide a ligand for a Cl- that is required for oxygen evolution. PSII binds additional chlorophylls, carotenoids and specific lipids..

Its subcellular location is the plastid. It localises to the chloroplast thylakoid membrane. Its function is as follows. One of the components of the core complex of photosystem II (PSII). It binds chlorophyll and helps catalyze the primary light-induced photochemical processes of PSII. PSII is a light-driven water:plastoquinone oxidoreductase, using light energy to abstract electrons from H(2)O, generating O(2) and a proton gradient subsequently used for ATP formation. The protein is Photosystem II CP43 reaction center protein of Cicer arietinum (Chickpea).